The primary structure comprises 263 residues: Heat-labile enterotoxin IIB, A chain (263 aa).

A signal peptide spans 1-20 (MAKVISFFISLFLISFPLYA). 26-39 (ADSRTPDEVRRSGG) lines the NAD(+) pocket. Residue E130 is part of the active site. Cysteines 205 and 217 form a disulfide.

It belongs to the enterotoxin A family. As to quaternary structure, heterohexamer of one A chain and of five B chains.

The biological activity of the toxin is produced by the A chain, which activates intracellular adenyl cyclase. This is Heat-labile enterotoxin IIB, A chain from Escherichia coli.